The chain runs to 896 residues: DNA mismatch repair protein MutS (896 aa).

618–625 lines the ATP pocket; it reads GPNMSGKS. The segment covering 805–825 has biased composition (basic and acidic residues); that stretch reads GKESTKTGKGENKNISHKTES. The interval 805 to 826 is disordered; the sequence is GKESTKTGKGENKNISHKTESD.

This sequence belongs to the DNA mismatch repair MutS family.

Functionally, this protein is involved in the repair of mismatches in DNA. It is possible that it carries out the mismatch recognition step. This protein has a weak ATPase activity. The protein is DNA mismatch repair protein MutS of Halothermothrix orenii (strain H 168 / OCM 544 / DSM 9562).